We begin with the raw amino-acid sequence, 260 residues long: 1-(5-phosphoribosyl)-5-[(5-phosphoribosylamino)methylideneamino] imidazole-4-carboxamide isomerase (260 aa).

The Proton acceptor role is filled by D8. D130 functions as the Proton donor in the catalytic mechanism.

The protein belongs to the HisA/HisF family.

It localises to the cytoplasm. It carries out the reaction 1-(5-phospho-beta-D-ribosyl)-5-[(5-phospho-beta-D-ribosylamino)methylideneamino]imidazole-4-carboxamide = 5-[(5-phospho-1-deoxy-D-ribulos-1-ylimino)methylamino]-1-(5-phospho-beta-D-ribosyl)imidazole-4-carboxamide. Its pathway is amino-acid biosynthesis; L-histidine biosynthesis; L-histidine from 5-phospho-alpha-D-ribose 1-diphosphate: step 4/9. This chain is 1-(5-phosphoribosyl)-5-[(5-phosphoribosylamino)methylideneamino] imidazole-4-carboxamide isomerase, found in Chlorobaculum parvum (strain DSM 263 / NCIMB 8327) (Chlorobium vibrioforme subsp. thiosulfatophilum).